The sequence spans 365 residues: MTAAPTLQTIRLAPKALLHDHLDGGLRPATVLDIAGQVGYDDLPATDVDALASWFRTQSHSGSLERYLEPFSHTVAVMQTPEALYRVAFECAQDLAADSVVYAEVRFAPELHISCGLSFDDVVDTVLTGFAAGEKACAADGQPITVRCLVTAMRHAAMSREIAELAIRFRDKGVVGFDIAGAEAGHPPTRHLDAFEYMRDHNARFTIHAGEAFGLPSIHEAIAFCGADRLGHGVRIVDDIDVDADGGFQLGRLAAILRDKRIPLELCPSSNVQTGAVASIAEHPFDLLARARFRVTVNTDNRLMSDTSMSLEMHRLVEAFGYGWSDLARFTVNAMKSAFIPFDQRLAIIDEVIKPRFAALMGHSE.

Residues His19 and His21 each contribute to the Zn(2+) site. Residues His21, Asp23, and Gly181 each contribute to the substrate site. His208 lines the Zn(2+) pocket. Residue Glu211 is the Proton donor of the active site. Asp300 is a binding site for Zn(2+).

This sequence belongs to the metallo-dependent hydrolases superfamily. Adenosine and AMP deaminases family. Adenosine deaminase subfamily. Zn(2+) serves as cofactor.

It carries out the reaction adenosine + H2O + H(+) = inosine + NH4(+). The enzyme catalyses 2'-deoxyadenosine + H2O + H(+) = 2'-deoxyinosine + NH4(+). Catalyzes the hydrolytic deamination of adenosine and 2-deoxyadenosine. The polypeptide is Adenosine deaminase (Mycobacterium tuberculosis (strain ATCC 25177 / H37Ra)).